Consider the following 424-residue polypeptide: UDP-sugar transporter protein SLC35A5 (424 aa).

Residues 1 to 8 are Cytoplasmic-facing; the sequence is MEKQCCSH. Residues 9 to 29 form a helical membrane-spanning segment; it reads PVICSLSTMYTFLLGAIFIAL. Residues 30-53 lie on the Lumenal side of the membrane; the sequence is SSSRILLVKYSANEENKYDYLPTT. Residues 54-74 form a helical membrane-spanning segment; the sequence is ANVCSELVKLVFCVLVSFCVI. Residues 75–93 lie on the Cytoplasmic side of the membrane; it reads KKDHQSRNLKYASWKEFSN. The helical transmembrane segment at 94-116 threads the bilayer; that stretch reads FMKWSIPAFLYFLDNLIVFYVLS. Topologically, residues 117-119 are lumenal; sequence YLQ. A helical transmembrane segment spans residues 120 to 142; that stretch reads PAMAVIFSNFSIITTALLFRIVL. The Cytoplasmic portion of the chain corresponds to 143 to 147; sequence KRRLN. A helical transmembrane segment spans residues 148–168; that stretch reads WIQWASLLILFLSIVALTAGT. Topologically, residues 169 to 228 are lumenal; sequence KTLQHNLAGHGFHHDAFFSPSNSCLLFRSECPRKDNCTAKEWTFPEAKWNTTARVFSHIR. The N-linked (GlcNAc...) asparagine glycan is linked to Asn-204. A helical transmembrane segment spans residues 229-249; that stretch reads LGMGHVLIIVQCFISSMANIY. At 250–263 the chain is on the cytoplasmic side; the sequence is NEKILKEGNQLAES. A helical membrane pass occupies residues 264–284; sequence IFIQNSKLYFFGILFNGLTLG. The Lumenal portion of the chain corresponds to 285 to 303; that stretch reads LQRSNRDQIKNCGFFYGHN. The helical transmembrane segment at 304–324 threads the bilayer; it reads AFSVALIFVTAFQGLSVAFIL. At 325–330 the chain is on the cytoplasmic side; sequence KFLDNM. The chain crosses the membrane as a helical span at residues 331–351; sequence FHVLMAQVTTVIITTVSVLVF. Residues 352 to 354 are Lumenal-facing; it reads DFR. Residues 355–375 traverse the membrane as a helical segment; that stretch reads PSLEFFLEAPSVLLSIFIYNA. Residues 376–424 lie on the Cytoplasmic side of the membrane; sequence SKPQGPEYAPRQERIRDLSGNLWERSSGDGEELERLTKPKSDESDEDTF. Residues Ser-394, Ser-416, and Ser-419 each carry the phosphoserine modification. The disordered stretch occupies residues 395–424; sequence GNLWERSSGDGEELERLTKPKSDESDEDTF. Positions 408 to 417 are enriched in basic and acidic residues; it reads LERLTKPKSD.

It belongs to the nucleotide-sugar transporter family. SLC35A subfamily. Probably forms homooligomers and heterooligomers with SLC35A1, SLC35A2, SLC35A3 and SLC35A4.

It is found in the golgi apparatus membrane. The enzyme catalyses UMP(out) + UDP-alpha-D-glucuronate(in) = UMP(in) + UDP-alpha-D-glucuronate(out). It carries out the reaction UMP(out) + UDP-N-acetyl-alpha-D-glucosamine(in) = UMP(in) + UDP-N-acetyl-alpha-D-glucosamine(out). The catalysed reaction is UDP-N-acetyl-alpha-D-galactosamine(in) + UMP(out) = UDP-N-acetyl-alpha-D-galactosamine(out) + UMP(in). Functionally, probable UDP-sugar:UMP transmembrane antiporter involved in UDP-alpha-D-glucuronate/UDP-GlcA, UDP-GlcNAc/UDP-N-acetyl-alpha-D-glucosamine and UDP-N-acetyl-alpha-D-galactosamine/UDP-GalNAc transport from the cytosol to the lumen of the Golgi. This chain is UDP-sugar transporter protein SLC35A5, found in Pongo abelii (Sumatran orangutan).